A 256-amino-acid polypeptide reads, in one-letter code: uncharacterized protein (256 aa).

The signal sequence occupies residues 1-22; that stretch reads MGYLKRIGMCISLLIVIIFVTS. Cys-23 carries N-palmitoyl cysteine lipidation. Cys-23 carries S-diacylglycerol cysteine lipidation.

The protein belongs to the staphylococcal tandem lipoprotein family.

The protein localises to the cell membrane. This is an uncharacterized protein from Staphylococcus aureus (strain MRSA252).